We begin with the raw amino-acid sequence, 537 residues long: Probable alpha-galactosidase A (537 aa).

The first 23 residues, 1–23 (MNQGTKSILLAATLAAIPWQVYG), serve as a signal peptide directing secretion. Cysteines 46 and 78 form a disulfide. Asn-49, Asn-87, Asn-93, and Asn-123 each carry an N-linked (GlcNAc...) asparagine glycan. A disulfide bridge links Cys-126 with Cys-156. The active-site Nucleophile is Asp-154. N-linked (GlcNAc...) asparagine glycosylation is present at Asn-203. Asp-212 acts as the Proton donor in catalysis. 2 N-linked (GlcNAc...) asparagine glycosylation sites follow: Asn-355 and Asn-436. Residues 413 to 537 (CSSVVPTGLV…FGLPSGVQLS (125 aa)) form the Ricin B-type lectin domain. 2 disulfide bridges follow: Cys-430–Cys-444 and Cys-469–Cys-482. An N-linked (GlcNAc...) asparagine glycan is attached at Asn-491.

This sequence belongs to the glycosyl hydrolase 27 family.

The protein localises to the secreted. It carries out the reaction Hydrolysis of terminal, non-reducing alpha-D-galactose residues in alpha-D-galactosides, including galactose oligosaccharides, galactomannans and galactolipids.. Hydrolyzes a variety of simple alpha-D-galactoside as well as more complex molecules such as oligosaccharides and polysaccharides. In Aspergillus niger (strain ATCC MYA-4892 / CBS 513.88 / FGSC A1513), this protein is Probable alpha-galactosidase A (aglA).